Reading from the N-terminus, the 92-residue chain is Small ribosomal subunit protein bS18 (92 aa).

This sequence belongs to the bacterial ribosomal protein bS18 family. Part of the 30S ribosomal subunit. Forms a tight heterodimer with protein bS6.

Its function is as follows. Binds as a heterodimer with protein bS6 to the central domain of the 16S rRNA, where it helps stabilize the platform of the 30S subunit. This chain is Small ribosomal subunit protein bS18, found in Cupriavidus necator (strain ATCC 17699 / DSM 428 / KCTC 22496 / NCIMB 10442 / H16 / Stanier 337) (Ralstonia eutropha).